Here is a 176-residue protein sequence, read N- to C-terminus: Probable superoxide oxidase CybB (176 aa).

4 consecutive transmembrane segments (helical) span residues 7 to 27 (CLQI…WSSI), 44 to 64 (IHFS…LIQL), 85 to 105 (VGHW…IAIL), and 137 to 157 (HLLL…AALL). Residues H13 and H45 each coordinate heme b. The heme b site is built by H137 and H151.

This sequence belongs to the cytochrome b561 family. Heme b serves as cofactor.

It is found in the cell inner membrane. The enzyme catalyses a ubiquinol + 2 O2 = 2 superoxide + a ubiquinone + 2 H(+). B-type di-heme cytochrome. Catalyzes the oxidation of superoxide to molecular oxygen and transfers the extracted electrons to ubiquinone through the two hemes. The protein is Probable superoxide oxidase CybB (cybB) of Yersinia pestis.